Here is a 955-residue protein sequence, read N- to C-terminus: 2-oxoglutarate dehydrogenase E1 component (955 aa).

It belongs to the alpha-ketoglutarate dehydrogenase family. As to quaternary structure, homodimer. Part of the 2-oxoglutarate dehydrogenase (OGDH) complex composed of E1 (2-oxoglutarate dehydrogenase), E2 (dihydrolipoamide succinyltransferase) and E3 (dihydrolipoamide dehydrogenase); the complex contains multiple copies of the three enzymatic components (E1, E2 and E3). Thiamine diphosphate is required as a cofactor.

It catalyses the reaction N(6)-[(R)-lipoyl]-L-lysyl-[protein] + 2-oxoglutarate + H(+) = N(6)-[(R)-S(8)-succinyldihydrolipoyl]-L-lysyl-[protein] + CO2. Functionally, E1 component of the 2-oxoglutarate dehydrogenase (OGDH) complex which catalyzes the decarboxylation of 2-oxoglutarate, the first step in the conversion of 2-oxoglutarate to succinyl-CoA and CO(2). The protein is 2-oxoglutarate dehydrogenase E1 component of Bacillus cereus (strain AH187).